A 516-amino-acid polypeptide reads, in one-letter code: uncharacterized protein (516 aa).

2 PFTB repeats span residues 45–86 (RQDA…QRAD) and 401–443 (DERA…DGSE).

This is an uncharacterized protein from Sinorhizobium fredii (strain NBRC 101917 / NGR234).